A 447-amino-acid polypeptide reads, in one-letter code: Tubulin beta-2 chain (447 aa).

The GTP site is built by Gln11, Glu69, Ser138, Gly142, Thr143, Gly144, Asn204, and Asn226. Glu69 contacts Mg(2+). A disordered region spans residues Val419–Asp447. Acidic residues predominate over residues Thr429–Asp447.

The protein belongs to the tubulin family. In terms of assembly, dimer of alpha and beta chains. A typical microtubule is a hollow water-filled tube with an outer diameter of 25 nm and an inner diameter of 15 nM. Alpha-beta heterodimers associate head-to-tail to form protofilaments running lengthwise along the microtubule wall with the beta-tubulin subunit facing the microtubule plus end conferring a structural polarity. Microtubules usually have 13 protofilaments but different protofilament numbers can be found in some organisms and specialized cells. It depends on Mg(2+) as a cofactor. In terms of tissue distribution, expressed in leaf sheaths and suspension cultured cells.

The protein localises to the cytoplasm. Its subcellular location is the cytoskeleton. Its function is as follows. Tubulin is the major constituent of microtubules, a cylinder consisting of laterally associated linear protofilaments composed of alpha- and beta-tubulin heterodimers. Microtubules grow by the addition of GTP-tubulin dimers to the microtubule end, where a stabilizing cap forms. Below the cap, tubulin dimers are in GDP-bound state, owing to GTPase activity of alpha-tubulin. The polypeptide is Tubulin beta-2 chain (TUBB2) (Oryza sativa subsp. japonica (Rice)).